The primary structure comprises 183 residues: Photosystem II extrinsic protein V (183 aa).

A signal peptide spans 1-31 (MTFGHCRRASTLRSAFVLGLCGLLLAGCSGA). Heme c is bound by residues Cys-84, Cys-87, His-88, and Cys-138.

This sequence belongs to the cytochrome c family. PsbV subfamily. As to quaternary structure, PSII is composed of 1 copy each of membrane proteins PsbA, PsbB, PsbC, PsbD, PsbE, PsbF, PsbH, PsbI, PsbJ, PsbK, PsbL, PsbM, PsbT, PsbX, Psb30/Ycf12, peripheral proteins PsbO, CyanoQ (PsbQ), PsbU, PsbV and a large number of cofactors. It forms dimeric complexes. Requires heme c as cofactor.

The protein resides in the cell inner membrane. Probably one of the extrinsic, lumenal subunits of photosystem II (PSII). PSII is a light-driven water plastoquinone oxidoreductase, using light energy to abstract electrons from H(2)O, generating a proton gradient subsequently used for ATP formation. The extrinsic proteins stabilize the structure of photosystem II oxygen-evolving complex (OEC), the ion environment of oxygen evolution and protect the OEC against heat-induced inactivation. Low-potential cytochrome c that plays a role in the OEC of PSII. The polypeptide is Photosystem II extrinsic protein V (psbV1) (Gloeobacter violaceus (strain ATCC 29082 / PCC 7421)).